The chain runs to 546 residues: ATP synthase subunit alpha (546 aa).

172–179 (GDRKTGKT) serves as a coordination point for ATP. 2 stretches are compositionally biased toward polar residues: residues 511 to 520 (FRTTEGNNLG) and 536 to 546 (TELNVSRKTAK). The tract at residues 511–546 (FRTTEGNNLGTEAPVDPLAADDVNKTELNVSRKTAK) is disordered.

Belongs to the ATPase alpha/beta chains family. In terms of assembly, F-type ATPases have 2 components, CF(1) - the catalytic core - and CF(0) - the membrane proton channel. CF(1) has five subunits: alpha(3), beta(3), gamma(1), delta(1), epsilon(1). CF(0) has three main subunits: a(1), b(2) and c(9-12). The alpha and beta chains form an alternating ring which encloses part of the gamma chain. CF(1) is attached to CF(0) by a central stalk formed by the gamma and epsilon chains, while a peripheral stalk is formed by the delta and b chains.

It localises to the cell membrane. The enzyme catalyses ATP + H2O + 4 H(+)(in) = ADP + phosphate + 5 H(+)(out). In terms of biological role, produces ATP from ADP in the presence of a proton gradient across the membrane. The alpha chain is a regulatory subunit. The sequence is that of ATP synthase subunit alpha from Corynebacterium aurimucosum (strain ATCC 700975 / DSM 44827 / CIP 107346 / CN-1) (Corynebacterium nigricans).